The primary structure comprises 340 residues: Uroporphyrinogen decarboxylase (340 aa).

Substrate contacts are provided by residues 23-27 (RQAGR), aspartate 72, tyrosine 147, threonine 202, and histidine 316.

The protein belongs to the uroporphyrinogen decarboxylase family. As to quaternary structure, homodimer.

The protein resides in the cytoplasm. It carries out the reaction uroporphyrinogen III + 4 H(+) = coproporphyrinogen III + 4 CO2. Its pathway is porphyrin-containing compound metabolism; protoporphyrin-IX biosynthesis; coproporphyrinogen-III from 5-aminolevulinate: step 4/4. In terms of biological role, catalyzes the decarboxylation of four acetate groups of uroporphyrinogen-III to yield coproporphyrinogen-III. The polypeptide is Uroporphyrinogen decarboxylase (Pelobacter propionicus (strain DSM 2379 / NBRC 103807 / OttBd1)).